Here is a 558-residue protein sequence, read N- to C-terminus: Cyclomaltodextrinase (558 aa).

The Ca(2+) site is built by Asn-143, Gly-168, and Asp-170. Positions 243 and 323 each coordinate substrate. The Nucleophile role is filled by Asp-325. Catalysis depends on Glu-354, which acts as the Proton donor. Substrate is bound by residues 420–421, Asp-465, and Arg-469; that span reads HD.

This sequence belongs to the glycosyl hydrolase 13 family. Monomer. Depending on the pH of the solution, exists as a monomer, a homodimer or as an assembly of six homodimers forming a dodecamer, which is catalytically the most efficient form of the enzyme. Requires Ca(2+) as cofactor.

The catalysed reaction is cyclomaltodextrin + H2O = linear maltodextrin. The enzyme catalyses Hydrolysis of pullulan to panose (6-alpha-D-glucosylmaltose).. Its activity is regulated as follows. Hydrolysis of beta-cyclodextrin is inhibited by Cu(2+), Zn(2+) and Ag(+), and activated by Ca(2+), EGTA and EDTA. Activity is increased over twofold in the presence of 5 mM EDTA. Competitively inhibited by acarbose and methyl 6-amino-6-deoxy-alpha-D-glucopyranoside by reducing the rate of the ring opening step of the reaction. Hydrolyzes alpha-, beta- and gamma-cyclodextrins and the resulting linear maltodextrins, with the highest activity with beta-cyclodextrin (cyclomaltoheptaose). Soluble starch is hydrolyzed slowly, but it is nevertheless preferred over pullulan as a substrate. Is able to hydrolyze amylose and amylopectin, with a very strong preference for amylose, with maltose and glucose as the main products. Maltose and glucose are the main hydrolysis products of cyclomaltodextrins, maltodextrins and starch, whereas panose is the main hydrolysis product of pullulan. Acarbose is partially hydrolyzed to glucose and pseudotrisaccharide. No activity with maltose as substrate. Has transglycosylating activity with high concentrations of maltotriose, maltotetraose and starch. This chain is Cyclomaltodextrinase, found in Bacillus sp.